A 259-amino-acid chain; its full sequence is Acetylglutamate kinase (259 aa).

Substrate is bound by residues 45 to 46 (GG), Arg-67, and Asn-159.

The protein belongs to the acetylglutamate kinase family. ArgB subfamily.

It is found in the cytoplasm. It carries out the reaction N-acetyl-L-glutamate + ATP = N-acetyl-L-glutamyl 5-phosphate + ADP. It functions in the pathway amino-acid biosynthesis; L-arginine biosynthesis; N(2)-acetyl-L-ornithine from L-glutamate: step 2/4. In terms of biological role, catalyzes the ATP-dependent phosphorylation of N-acetyl-L-glutamate. The polypeptide is Acetylglutamate kinase (Aeromonas hydrophila subsp. hydrophila (strain ATCC 7966 / DSM 30187 / BCRC 13018 / CCUG 14551 / JCM 1027 / KCTC 2358 / NCIMB 9240 / NCTC 8049)).